Here is a 235-residue protein sequence, read N- to C-terminus: Phosphoribosylaminoimidazole-succinocarboxamide synthase (235 aa).

It belongs to the SAICAR synthetase family.

It catalyses the reaction 5-amino-1-(5-phospho-D-ribosyl)imidazole-4-carboxylate + L-aspartate + ATP = (2S)-2-[5-amino-1-(5-phospho-beta-D-ribosyl)imidazole-4-carboxamido]succinate + ADP + phosphate + 2 H(+). The protein operates within purine metabolism; IMP biosynthesis via de novo pathway; 5-amino-1-(5-phospho-D-ribosyl)imidazole-4-carboxamide from 5-amino-1-(5-phospho-D-ribosyl)imidazole-4-carboxylate: step 1/2. This Thermoanaerobacter pseudethanolicus (strain ATCC 33223 / 39E) (Clostridium thermohydrosulfuricum) protein is Phosphoribosylaminoimidazole-succinocarboxamide synthase.